Reading from the N-terminus, the 221-residue chain is Iron-sulfur cluster repair protein YtfE (221 aa).

This sequence belongs to the RIC family. YtfE subfamily. In terms of assembly, homodimer.

Its subcellular location is the cytoplasm. In terms of biological role, di-iron-containing protein involved in the repair of iron-sulfur clusters damaged by oxidative and nitrosative stress conditions. This is Iron-sulfur cluster repair protein YtfE from Cronobacter sakazakii (strain ATCC BAA-894) (Enterobacter sakazakii).